The primary structure comprises 224 residues: Dehydration-responsive element-binding protein 1G (224 aa).

A compositionally biased stretch (polar residues) spans methionine 1–proline 16. The segment at methionine 1–lysine 46 is disordered. The AP2/ERF DNA-binding region spans valine 54–alanine 111.

It belongs to the AP2/ERF transcription factor family. ERF subfamily.

Its subcellular location is the nucleus. Functionally, transcriptional activator that binds specifically to the DNA sequence 5'-[AG]CCGAC-3'. Binding to the C-repeat/DRE element mediates high salinity- and dehydration-inducible transcription. This Oryza sativa subsp. indica (Rice) protein is Dehydration-responsive element-binding protein 1G (DREB1G).